The sequence spans 555 residues: Membrane protein insertase YidC (555 aa).

The helical transmembrane segment at 7–24 threads the bilayer; that stretch reads ILWVIFSMSLVLLYDNWQ. The interval 62 to 81 is disordered; the sequence is APGAAGTAAPAAPQAAAQPT. The next 5 membrane-spanning stretches (helical) occupy residues 334-354, 360-380, 430-450, 468-488, and 503-523; these read LELV…FWLL, FLGN…LVFF, LGGC…YWVL, LSVP…MFVQ, and VMMI…AGLV.

Belongs to the OXA1/ALB3/YidC family. Type 1 subfamily. As to quaternary structure, interacts with the Sec translocase complex via SecD. Specifically interacts with transmembrane segments of nascent integral membrane proteins during membrane integration.

The protein localises to the cell inner membrane. Its function is as follows. Required for the insertion and/or proper folding and/or complex formation of integral membrane proteins into the membrane. Involved in integration of membrane proteins that insert both dependently and independently of the Sec translocase complex, as well as at least some lipoproteins. Aids folding of multispanning membrane proteins. The protein is Membrane protein insertase YidC of Cupriavidus necator (strain ATCC 17699 / DSM 428 / KCTC 22496 / NCIMB 10442 / H16 / Stanier 337) (Ralstonia eutropha).